A 124-amino-acid polypeptide reads, in one-letter code: Large ribosomal subunit protein bL12 (124 aa).

It belongs to the bacterial ribosomal protein bL12 family. As to quaternary structure, homodimer. Part of the ribosomal stalk of the 50S ribosomal subunit. Forms a multimeric L10(L12)X complex, where L10 forms an elongated spine to which 2 to 4 L12 dimers bind in a sequential fashion. Binds GTP-bound translation factors.

Its function is as follows. Forms part of the ribosomal stalk which helps the ribosome interact with GTP-bound translation factors. Is thus essential for accurate translation. The chain is Large ribosomal subunit protein bL12 from Burkholderia lata (strain ATCC 17760 / DSM 23089 / LMG 22485 / NCIMB 9086 / R18194 / 383).